Here is a 147-residue protein sequence, read N- to C-terminus: Epididymal secretory protein E3-alpha (147 aa).

The signal sequence occupies residues 1 to 25; the sequence is MTSSLKIWGILLALLCILCRLCVYS.

Epididymis, with predominant expression in the corpus region. Moderately expressed in the vas deferens; only low levels are detectable in the caput and cauda regions.

The protein localises to the secreted. Its function is as follows. Possible function in sperm maturation. The protein is Epididymal secretory protein E3-alpha (EDDM3A) of Homo sapiens (Human).